The primary structure comprises 329 residues: Olfactory receptor 5AL1 (329 aa).

At 1 to 44 (MCALKGFLEENFYTYSVAKGNHSTVYEFILLGLTDNAELQVTLF) the chain is on the extracellular side. N-linked (GlcNAc...) asparagine glycosylation occurs at Asn21. A helical membrane pass occupies residues 45–65 (GIFLVVYLASFMGNFGLIMLI). Over 66–73 (QISPQLHT) the chain is Cytoplasmic. A helical membrane pass occupies residues 74–94 (PMYFFLSHLAFVDFSFTSSVA). The Extracellular portion of the chain corresponds to 95 to 113 (PNTLVNFLCEVKSITFYAC). The cysteines at positions 113 and 205 are disulfide-linked. Residues 114–134 (AIQVCCFITFVVCELYLLSIM) traverse the membrane as a helical segment. At 135–157 (AYDRYVAICNPLLYVILIPRKLC) the chain is on the cytoplasmic side. A helical membrane pass occupies residues 158–178 (IKLIASTYVYGFTVGLVQTVA). At 179 to 220 (TSYLSFCDSNVINHFYHDDVPLVALACSDTHVKELMLLIIAG) the chain is on the extracellular side. The chain crosses the membrane as a helical span at residues 221 to 241 (FNTLCSLVIVLISYGFIFFAI). Residues 242–253 (LRIHSAEGRQKA) lie on the Cytoplasmic side of the membrane. A helical membrane pass occupies residues 254–274 (FSTSASHLTSITIFYGTIIFM). Topologically, residues 275-287 (YPQPKSSHSLNMD) are extracellular. The chain crosses the membrane as a helical span at residues 288-308 (KVASVFNVVVIPTLNPLIYSL). Residues 309–329 (RNQEVKNALKRIIEKLCLAVK) are Cytoplasmic-facing.

It belongs to the G-protein coupled receptor 1 family.

It is found in the cell membrane. Functionally, odorant receptor. This chain is Olfactory receptor 5AL1 (OR5AL1), found in Homo sapiens (Human).